A 596-amino-acid chain; its full sequence is Transcription factor EGL1 (596 aa).

A bHLH domain is found at 401-450 (EETGNHALSEKKRREKLNERFMTLRSIIPSISKIDKVSILDDTIEYLQDL).

Efficient DNA binding requires dimerization with another bHLH protein. Homodimer and heterodimer with GL3. Interacts with CPC, MYB0/GL1, MYB5, MYB23, MYB113, MYB114, MYB75/PAP1, MYB90/PAP2, TT2, TRY, TTG1 and MYB66/WER. As to expression, ubiquitous with higher levels in buds and flowers. Specifically localized in developing root hair cells. Expressed in epidermal root hair cells (trichoblasts) and moves to root hairless cells (atrichoblasts) by a cell-to-cell movement through plasmodesmata (at protein level).

The protein resides in the nucleus. Functionally, transcription activator, when associated with MYB75/PAP1, MYB90/PAP2 or TT2. Involved in epidermal cell fate specification. Negatively regulates stomata formation but promotes trichome formation. Together with MYB66/WER, promotes the formation of non-hair cells in root epidermis cells in the N position. Whereas together with CPC, promotes the formation of hair cells in root epidermis cells in the H position by inhibiting non-hair cell formation. Also seems to play a role in the activation of anthocyanin biosynthesis, probably together with MYB75/PAP1. Involved in seed mucilage production. Activates the transcription of GL2. This chain is Transcription factor EGL1 (BHLH2), found in Arabidopsis thaliana (Mouse-ear cress).